A 382-amino-acid chain; its full sequence is Opsin Rh3 (382 aa).

The Extracellular segment spans residues 1 to 56 (MEYHNVSSVLGNVSSVLRPDARLSAESRLLGWNVPPDELRHIPEHWLIYPEPPESM). A glycan (N-linked (GlcNAc...) asparagine) is linked at Asn-12. The helical transmembrane segment at 57-81 (NYLLGTLYIFFTVISMIGNGLVMWV) threads the bilayer. At 82–93 (FSAAKSLRTPSN) the chain is on the cytoplasmic side. The helical transmembrane segment at 94-118 (ILVINLAFCDFMMMIKTPIFIYNSF) threads the bilayer. At 119–132 (HQGYALGHLGCQIF) the chain is on the extracellular side. A disulfide bridge links Cys-129 with Cys-206. Residues 133-152 (GVIGSYTGIAAGATNAFIAY) form a helical membrane-spanning segment. Over 153-170 (DRYNVITRPMEGKMTHGK) the chain is Cytoplasmic. The chain crosses the membrane as a helical span at residues 171–195 (AIAMIIFIYLYATPWVVACYTESWG). Residues 196-219 (RFVPEGYLTSCTFDYLTDNFDTRL) lie on the Extracellular side of the membrane. The helical transmembrane segment at 220–247 (FVACIFFFSFVCPTTMITYYYSQIVGHV) threads the bilayer. At 248-283 (FSHEKALRDQAKKMNVDSLRSNVDKSKEAAEIRIAK) the chain is on the cytoplasmic side. Residues 284 to 307 (AAITICFLFFASWTPYGVMSLIGA) traverse the membrane as a helical segment. Over 308–315 (FGDKTLLT) the chain is Extracellular. The chain crosses the membrane as a helical span at residues 316-340 (PGATMIPACTCKMVACIDPFVYAIS). Residue Lys-327 is modified to N6-(retinylidene)lysine. Residues 341-382 (HPRYRMELQKRCPWLAISEKAPESAAAISTSTTQEQQQTTAA) are Cytoplasmic-facing.

It belongs to the G-protein coupled receptor 1 family. Opsin subfamily. Post-translationally, phosphorylated on some or all of the serine and threonine residues present in the C-terminal region.

It localises to the membrane. Its function is as follows. Visual pigments are the light-absorbing molecules that mediate vision. They consist of an apoprotein, opsin, covalently linked to cis-retinal. The chain is Opsin Rh3 (Rh3) from Drosophila pseudoobscura pseudoobscura (Fruit fly).